The sequence spans 178 residues: Adenine phosphoribosyltransferase (178 aa).

The protein belongs to the purine/pyrimidine phosphoribosyltransferase family. In terms of assembly, homodimer.

The protein localises to the cytoplasm. It catalyses the reaction AMP + diphosphate = 5-phospho-alpha-D-ribose 1-diphosphate + adenine. The protein operates within purine metabolism; AMP biosynthesis via salvage pathway; AMP from adenine: step 1/1. Functionally, catalyzes a salvage reaction resulting in the formation of AMP, that is energically less costly than de novo synthesis. The sequence is that of Adenine phosphoribosyltransferase from Bacteroides fragilis (strain YCH46).